The sequence spans 718 residues: DNA ligase (718 aa).

NAD(+) is bound by residues 34-38, 83-84, and glutamate 115; these read DAEYD and SL. Lysine 117 serves as the catalytic N6-AMP-lysine intermediate. Residues arginine 138, glutamate 186, lysine 302, and lysine 326 each coordinate NAD(+). Positions 420, 423, 438, and 444 each coordinate Zn(2+). Positions 604–694 constitute a BRCT domain; that stretch reads PKGDALAGKT…DRSAPAASNN (91 aa).

Belongs to the NAD-dependent DNA ligase family. LigA subfamily. Requires Mg(2+) as cofactor. Mn(2+) serves as cofactor.

The catalysed reaction is NAD(+) + (deoxyribonucleotide)n-3'-hydroxyl + 5'-phospho-(deoxyribonucleotide)m = (deoxyribonucleotide)n+m + AMP + beta-nicotinamide D-nucleotide.. Its function is as follows. DNA ligase that catalyzes the formation of phosphodiester linkages between 5'-phosphoryl and 3'-hydroxyl groups in double-stranded DNA using NAD as a coenzyme and as the energy source for the reaction. It is essential for DNA replication and repair of damaged DNA. The polypeptide is DNA ligase (Roseiflexus castenholzii (strain DSM 13941 / HLO8)).